The following is a 256-amino-acid chain: Neuroendocrine secretory protein 55 (256 aa).

The N-terminal stretch at 1-46 is a signal peptide; that stretch reads MDRRSRAHQWRRARHNYNDLCPPIGRRAATALLWLSCSIALLRALA. A disordered region spans residues 61-256; it reads SFLNAHHRSA…RKGPIPIRRH (196 aa). The span at 86–103 shows a compositional bias: basic and acidic residues; that stretch reads ESDHEHEEAEPELARPEC. Acidic residues-rich tracts occupy residues 104–139 and 206–216; these read LEYDQDDYETETDSETEPESDIQSETEFETEPETEP and LDEDPRDPEES. The span at 225–236 shows a compositional bias: basic residues; sequence QPRRCKTRRPAR.

This sequence belongs to the NESP55 family. Post-translationally, binds keratan sulfate chains. May be proteolytically processed to give rise to a number of active peptides.

Its subcellular location is the cytoplasmic vesicle. It is found in the secretory vesicle. It localises to the synaptic vesicle. The protein localises to the secreted. This is Neuroendocrine secretory protein 55 from Rattus norvegicus (Rat).